The primary structure comprises 134 residues: Profilin-3 (134 aa).

A disulfide bridge links cysteine 13 with cysteine 118. The short motif at 84-100 is the Involved in PIP2 interaction element; that stretch reads AVIRGKKGSGGITIKKT.

It belongs to the profilin family. Occurs in many kinds of cells as a complex with monomeric actin in a 1:1 ratio. In terms of processing, phosphorylated by MAP kinases.

It is found in the cytoplasm. Its subcellular location is the cytoskeleton. In terms of biological role, binds to actin and affects the structure of the cytoskeleton. At high concentrations, profilin prevents the polymerization of actin, whereas it enhances it at low concentrations. This Olea europaea (Common olive) protein is Profilin-3.